Consider the following 95-residue polypeptide: Aspartyl/glutamyl-tRNA(Asn/Gln) amidotransferase subunit C (95 aa).

It belongs to the GatC family. As to quaternary structure, heterotrimer of A, B and C subunits.

It carries out the reaction L-glutamyl-tRNA(Gln) + L-glutamine + ATP + H2O = L-glutaminyl-tRNA(Gln) + L-glutamate + ADP + phosphate + H(+). It catalyses the reaction L-aspartyl-tRNA(Asn) + L-glutamine + ATP + H2O = L-asparaginyl-tRNA(Asn) + L-glutamate + ADP + phosphate + 2 H(+). Its function is as follows. Allows the formation of correctly charged Asn-tRNA(Asn) or Gln-tRNA(Gln) through the transamidation of misacylated Asp-tRNA(Asn) or Glu-tRNA(Gln) in organisms which lack either or both of asparaginyl-tRNA or glutaminyl-tRNA synthetases. The reaction takes place in the presence of glutamine and ATP through an activated phospho-Asp-tRNA(Asn) or phospho-Glu-tRNA(Gln). This is Aspartyl/glutamyl-tRNA(Asn/Gln) amidotransferase subunit C from Nitrobacter hamburgensis (strain DSM 10229 / NCIMB 13809 / X14).